A 660-amino-acid chain; its full sequence is Probable Xaa-Pro aminopeptidase PTRG_10574 (660 aa).

Mn(2+) contacts are provided by Asp-274, Asp-285, Glu-435, and Glu-476. Residues 641–660 (SAGSGSTPLWKPHNKQDKKN) form a disordered region.

This sequence belongs to the peptidase M24B family. The cofactor is Mn(2+).

The catalysed reaction is Release of any N-terminal amino acid, including proline, that is linked to proline, even from a dipeptide or tripeptide.. In terms of biological role, catalyzes the removal of a penultimate prolyl residue from the N-termini of peptides. The polypeptide is Probable Xaa-Pro aminopeptidase PTRG_10574 (Pyrenophora tritici-repentis (strain Pt-1C-BFP) (Wheat tan spot fungus)).